The primary structure comprises 344 residues: Ribosomal RNA large subunit methyltransferase Cfr (344 aa).

Glutamate 90 serves as the catalytic Proton acceptor. Residues 97–330 (KQGWESFCIS…ATVRTQFGSE (234 aa)) form the Radical SAM core domain. Residues cysteine 104 and cysteine 335 are joined by a disulfide bond. Cysteine 111, cysteine 115, and cysteine 118 together coordinate [4Fe-4S] cluster. Residues 157-158 (GE), serine 188, 211-213 (SLH), and asparagine 292 contribute to the S-adenosyl-L-methionine site. Cysteine 335 acts as the S-methylcysteine intermediate in catalysis.

The protein belongs to the radical SAM superfamily. RlmN family. Cfr subfamily. [4Fe-4S] cluster serves as cofactor.

It is found in the cytoplasm. It catalyses the reaction adenosine(2503) in 23S rRNA + 2 reduced [2Fe-2S]-[ferredoxin] + 2 S-adenosyl-L-methionine = 8-methyladenosine(2503) in 23S rRNA + 5'-deoxyadenosine + L-methionine + 2 oxidized [2Fe-2S]-[ferredoxin] + S-adenosyl-L-homocysteine. Specifically methylates position 8 of adenine 2503 in 23S rRNA. Confers resistance to some classes of antibiotics. In Clostridium botulinum (strain Loch Maree / Type A3), this protein is Ribosomal RNA large subunit methyltransferase Cfr.